The following is a 130-amino-acid chain: Small ribosomal subunit protein uS8 (130 aa).

The protein belongs to the universal ribosomal protein uS8 family. Part of the 30S ribosomal subunit.

In terms of biological role, one of the primary rRNA binding proteins, it binds directly to 16S rRNA central domain where it helps coordinate assembly of the platform of the 30S subunit. The chain is Small ribosomal subunit protein uS8 from Korarchaeum cryptofilum (strain OPF8).